The sequence spans 425 residues: UDP-N-acetylglucosamine 1-carboxyvinyltransferase (425 aa).

Phosphoenolpyruvate is bound at residue 23–24 (KN). Residue Arg-100 participates in UDP-N-acetyl-alpha-D-glucosamine binding. Cys-124 serves as the catalytic Proton donor. Cys-124 is modified (2-(S-cysteinyl)pyruvic acid O-phosphothioketal). Residues 169–172 (KVSV), Asp-313, and Val-335 contribute to the UDP-N-acetyl-alpha-D-glucosamine site.

It belongs to the EPSP synthase family. MurA subfamily.

The protein resides in the cytoplasm. The enzyme catalyses phosphoenolpyruvate + UDP-N-acetyl-alpha-D-glucosamine = UDP-N-acetyl-3-O-(1-carboxyvinyl)-alpha-D-glucosamine + phosphate. It functions in the pathway cell wall biogenesis; peptidoglycan biosynthesis. In terms of biological role, cell wall formation. Adds enolpyruvyl to UDP-N-acetylglucosamine. This chain is UDP-N-acetylglucosamine 1-carboxyvinyltransferase, found in Wolbachia pipientis subsp. Culex pipiens (strain wPip).